The chain runs to 217 residues: MNYPHPLIAREGWPFLAGAFLISLLVHASAGFWWALPLWIITLFVLQFFRDPPRPIPAQPNAVLAPADGRIVVVEKVQDPYAGREALKISVFMNVFNVHSNRASVDGKVEKLEYFPGKFVNADLDKASVENERNAVVIRRAADGQIVTLVQVAGLVARRILCYTKVGDSLSRGQRYGFIRFGSRVDVYLPVSARPRVTIGEKVSASSTILAELDEVK.

Catalysis depends on serine 183, which acts as the Schiff-base intermediate with substrate; via pyruvic acid. Serine 183 bears the Pyruvic acid (Ser); by autocatalysis mark.

The protein belongs to the phosphatidylserine decarboxylase family. PSD-A subfamily. In terms of assembly, heterodimer of a large membrane-associated beta subunit and a small pyruvoyl-containing alpha subunit. Pyruvate serves as cofactor. Post-translationally, is synthesized initially as an inactive proenzyme. Formation of the active enzyme involves a self-maturation process in which the active site pyruvoyl group is generated from an internal serine residue via an autocatalytic post-translational modification. Two non-identical subunits are generated from the proenzyme in this reaction, and the pyruvate is formed at the N-terminus of the alpha chain, which is derived from the carboxyl end of the proenzyme. The post-translation cleavage follows an unusual pathway, termed non-hydrolytic serinolysis, in which the side chain hydroxyl group of the serine supplies its oxygen atom to form the C-terminus of the beta chain, while the remainder of the serine residue undergoes an oxidative deamination to produce ammonia and the pyruvoyl prosthetic group on the alpha chain.

The protein localises to the cell membrane. It carries out the reaction a 1,2-diacyl-sn-glycero-3-phospho-L-serine + H(+) = a 1,2-diacyl-sn-glycero-3-phosphoethanolamine + CO2. It participates in phospholipid metabolism; phosphatidylethanolamine biosynthesis; phosphatidylethanolamine from CDP-diacylglycerol: step 2/2. Functionally, catalyzes the formation of phosphatidylethanolamine (PtdEtn) from phosphatidylserine (PtdSer). The protein is Phosphatidylserine decarboxylase proenzyme of Cupriavidus pinatubonensis (strain JMP 134 / LMG 1197) (Cupriavidus necator (strain JMP 134)).